The following is a 290-amino-acid chain: Shikimate dehydrogenase (NADP(+)) (290 aa).

Residues 20–22 (SLS) and T67 each bind shikimate. Catalysis depends on K71, which acts as the Proton acceptor. Residues N92 and D107 each coordinate shikimate. NADP(+) is bound by residues 130-134 (GAGGA) and L227. Shikimate is bound at residue Y229. An NADP(+)-binding site is contributed by G250.

It belongs to the shikimate dehydrogenase family. In terms of assembly, homodimer.

It catalyses the reaction shikimate + NADP(+) = 3-dehydroshikimate + NADPH + H(+). The protein operates within metabolic intermediate biosynthesis; chorismate biosynthesis; chorismate from D-erythrose 4-phosphate and phosphoenolpyruvate: step 4/7. Its function is as follows. Involved in the biosynthesis of the chorismate, which leads to the biosynthesis of aromatic amino acids. Catalyzes the reversible NADPH linked reduction of 3-dehydroshikimate (DHSA) to yield shikimate (SA). The sequence is that of Shikimate dehydrogenase (NADP(+)) from Syntrophomonas wolfei subsp. wolfei (strain DSM 2245B / Goettingen).